Here is a 5121-residue protein sequence, read N- to C-terminus: Hydrocephalus-inducing protein homolog (5121 aa).

An interaction with KIF9 region spans residues 363–754 (EFFEECITDP…VLFSSPTPSG (392 aa)). Over residues 956–967 (LSKKGRVKKGHA) the composition is skewed to basic residues. 7 disordered regions span residues 956 to 987 (LSKKGRVKKGHAHVQPQPSGSQEPRDPQSPVF), 1925 to 1951 (LAQENEEEDITSSDQGTSNSTKRTSLS), 2155 to 2186 (SKADSHGSGSQKQHHSHQSETPQISSSPLPPG), 2333 to 2459 (EQER…KFKT), 2482 to 2534 (LPPA…AERE), 2664 to 2684 (TNTTKAQEEQTSSSKGGKQKM), and 3852 to 3874 (KPDHQGSAQKDQLSQGTMHTGST). Residues 1908–1933 (EIKKSKEEQMRAKYLENLAQENEEED) are a coiled coil. Polar residues predominate over residues 1936-1951 (SSDQGTSNSTKRTSLS). Positions 2267-2365 (AQDYAAMKAQ…EDELKRRVKK (99 aa)) form a coiled coil. Composition is skewed to basic and acidic residues over residues 2333-2360 (EQERLAKEMQEKKLQQELERQKEEDELK), 2393-2418 (VDVKMETIERKISVREQTMSEKEELN), 2444-2453 (DNSKDPDKQL), 2489-2498 (EAPHEPDDQR), and 2509-2534 (KDRERERLEKERTEKERLEREKAERE). Residues 2504 to 2549 (GRRGRKDRERERLEKERTEKERLEREKAERERLEKLRALEERSDWE) are a coiled coil. Composition is skewed to polar residues over residues 2664 to 2679 (TNTTKAQEEQTSSSKG) and 3857 to 3874 (GSAQKDQLSQGTMHTGST).

As to quaternary structure, interacts with KIF9.

The protein resides in the cell projection. Its subcellular location is the cilium. It localises to the cytoplasm. The protein localises to the cytoskeleton. It is found in the cilium axoneme. The protein resides in the flagellum. Its function is as follows. Required for ciliary motility. The chain is Hydrocephalus-inducing protein homolog (HYDIN) from Homo sapiens (Human).